An 88-amino-acid chain; its full sequence is Small ribosomal subunit protein uS15 (88 aa).

This sequence belongs to the universal ribosomal protein uS15 family. In terms of assembly, part of the 30S ribosomal subunit. Forms a bridge to the 50S subunit in the 70S ribosome, contacting the 23S rRNA.

One of the primary rRNA binding proteins, it binds directly to 16S rRNA where it helps nucleate assembly of the platform of the 30S subunit by binding and bridging several RNA helices of the 16S rRNA. Its function is as follows. Forms an intersubunit bridge (bridge B4) with the 23S rRNA of the 50S subunit in the ribosome. This Mycoplasma mobile (strain ATCC 43663 / 163K / NCTC 11711) (Mesomycoplasma mobile) protein is Small ribosomal subunit protein uS15.